Reading from the N-terminus, the 126-residue chain is Probable 4-amino-4-deoxy-L-arabinose-phosphoundecaprenol flippase subunit ArnF (126 aa).

The helical transmembrane segment at 1–21 (MGFLWALFSVGLVSAAQLLLR) threads the bilayer. Topologically, residues 22-47 (SAMVALPPLTDIVAFLQHLLHFQPGT) are periplasmic. The helical transmembrane segment at 48-68 (VGLFFGLLGYLLSMVCWYFAL) threads the bilayer. Residues 69 to 76 (HRLPLSKA) are Cytoplasmic-facing. The helical transmembrane segment at 77–97 (YALLSLSYILVWAAAIWLPGW) threads the bilayer. At 98 to 100 (HEP) the chain is on the periplasmic side. A helical transmembrane segment spans residues 101–121 (FYWQSLLGVTIIVAGVLTIFW). Residues 122–126 (PVKRR) lie on the Cytoplasmic side of the membrane.

It belongs to the ArnF family. Heterodimer of ArnE and ArnF.

The protein resides in the cell inner membrane. The protein operates within bacterial outer membrane biogenesis; lipopolysaccharide biosynthesis. Translocates 4-amino-4-deoxy-L-arabinose-phosphoundecaprenol (alpha-L-Ara4N-phosphoundecaprenol) from the cytoplasmic to the periplasmic side of the inner membrane. This is Probable 4-amino-4-deoxy-L-arabinose-phosphoundecaprenol flippase subunit ArnF from Klebsiella pneumoniae (strain 342).